Reading from the N-terminus, the 550-residue chain is (+)-germacrene D synthase (550 aa).

Positions 304, 308, and 455 each coordinate Mg(2+). Positions aspartate 304–aspartate 308 match the DDXXD motif motif.

The protein belongs to the terpene synthase family. Tpsa subfamily. Mg(2+) is required as a cofactor. The cofactor is Mn(2+). It depends on Co(2+) as a cofactor. Requires Ni(2+) as cofactor.

It is found in the cytoplasm. It catalyses the reaction (2E,6E)-farnesyl diphosphate = (+)-germacrene D + diphosphate. The protein operates within secondary metabolite biosynthesis; terpenoid biosynthesis. Functionally, involved in the biosynthesis of germacrene D. Can use farnesyl diphosphate as substrate, but not geranyl diphosphate. Produces mainly (+)-germacrene D along with germacrene B and a number of minor by-products. This Zingiber officinale (Ginger) protein is (+)-germacrene D synthase.